The chain runs to 360 residues: Homeobox protein ceh-60 (360 aa).

Positions 1–82 (MDNLIKQLQM…ENPTFPLEEV (82 aa)) are PBC-A. Residues 1–179 (MDNLIKQLQM…ILVLRREIEQ (179 aa)) enclose the PBC domain. The segment at 85–179 (EKDEEWQPLE…ILVLRREIEQ (95 aa)) is PBC-B. Positions 180–242 (QGRKRRNFDK…NQRIRTKQQA (63 aa)) form a DNA-binding region, homeobox.

This sequence belongs to the TALE/PBX homeobox family. Forms a heterodimer with homeobox unc-62. Interacts with pqm-1.

The protein localises to the nucleus. In terms of biological role, probable transcription regulator which binds to DNA, repressing genes involved in longevity and stress, while activating genes involved in reproduction, such as the vitellogenins. Associates with homeobox unc-62 to regulate gene expression, including repression of genes involved in innate immunity. Required for intestinal expression of vitellogenin genes. Negatively modulates longevity, probably independently of effects on vitellogenesis. Involved in lipid homeostasis, contributing to the reallocation of intestinal lipids to the germline and to the formation of the cuticle. Associates with transcriptional regulator pqm-1 at the daf-16 associated element within the promoters of stress-responsive genes to regulate expression. The polypeptide is Homeobox protein ceh-60 (Caenorhabditis elegans).